The following is a 133-amino-acid chain: MASTDTISDMLTRIRNACAVRHSTTQVPTTKMTLSIAKVLKSEGFIEDYSETGEGINKMLVLTLKYKGKTRQPLINTLQRVSKPGLRVYSPSKKIPRVLGGIGIAIVSTSHGIMTDREARRQGIGGEILCYIW.

It belongs to the universal ribosomal protein uS8 family. As to quaternary structure, part of the 30S ribosomal subunit. Contacts proteins S5 and S12.

One of the primary rRNA binding proteins, it binds directly to 16S rRNA central domain where it helps coordinate assembly of the platform of the 30S subunit. The sequence is that of Small ribosomal subunit protein uS8 from Synechocystis sp. (strain ATCC 27184 / PCC 6803 / Kazusa).